Reading from the N-terminus, the 292-residue chain is D-alanyl-D-alanine endopeptidase (292 aa).

The signal sequence occupies residues 1–18 (MFKKALFILSLCPSFALA). Ser45 (acyl-ester intermediate) is an active-site residue. Catalysis depends on Lys48, which acts as the Proton acceptor. The active site involves Ser102. Lys207 serves as a coordination point for substrate.

This sequence belongs to the peptidase S11 family.

It localises to the periplasm. Its function is as follows. Cell wall formation. May play a specialized role in remodeling the cell wall. Specifically hydrolyzes the DD-diaminopimelate-alanine bonds in high-molecular-mass murein sacculi. This Haemophilus influenzae (strain ATCC 51907 / DSM 11121 / KW20 / Rd) protein is D-alanyl-D-alanine endopeptidase (pbpG).